Consider the following 380-residue polypeptide: UPF0754 membrane protein Bsph_0374 (380 aa).

A run of 2 helical transmembrane segments spans residues 1-21 (MDNF…IGGV) and 357-377 (MITV…GLIV).

Belongs to the UPF0754 family.

It localises to the cell membrane. This Lysinibacillus sphaericus (strain C3-41) protein is UPF0754 membrane protein Bsph_0374.